We begin with the raw amino-acid sequence, 231 residues long: Ribosyldihydronicotinamide dehydrogenase [quinone] (231 aa).

FAD-binding positions include H12 and 18–21 (FNGS). Residue S80 is modified to Phosphoserine. 104–107 (LYWF) provides a ligand contact to FAD. Substrate is bound at residue 127 to 129 (FDI). Residues 148–151 (TTGG) and Y156 each bind FAD. 2 residues coordinate Zn(2+): H174 and H178. Residue E194 participates in FAD binding. Phosphoserine is present on S197. Position 201 (R201) interacts with FAD. Position 223 (C223) interacts with Zn(2+).

It belongs to the NAD(P)H dehydrogenase (quinone) family. Homodimer. It depends on Zn(2+) as a cofactor. FAD is required as a cofactor.

It is found in the cytoplasm. It catalyses the reaction 1-(beta-D-ribofuranosyl)-1,4-dihydronicotinamide + a quinone + H(+) = beta-nicotinamide D-riboside + a quinol. Functionally, the enzyme apparently serves as a quinone reductase in connection with conjugation reactions of hydroquinones involved in detoxification pathways as well as in biosynthetic processes such as the vitamin K-dependent gamma-carboxylation of glutamate residues in prothrombin synthesis. This Pongo abelii (Sumatran orangutan) protein is Ribosyldihydronicotinamide dehydrogenase [quinone] (NQO2).